The sequence spans 511 residues: RNA polymerase principal sigma factor HrdB (511 aa).

The interval 72–186 is disordered; it reads SAAEPKRTRK…AATEEPEGTE (115 aa). Residues 78–93 show a composition bias toward basic residues; the sequence is RTRKSVAAKSPAKRTA. The segment covering 94–121 has biased composition (low complexity); that stretch reads TKAVAAKPVTSRKATAPAAPAAPATEPA. A compositionally biased stretch (basic residues) spans 132-158; it reads AAAKKTTAKKATAKKTTAKKAAAKKTT. Residues 211-347 are binds RNA polymerase-binding protein RbpA; sequence TADPVKDYLK…ITRAMADQAR (137 aa). The tract at residues 278–348 is sigma-70 factor domain-2; sequence LLEANLRLVV…TRAMADQART (71 aa). Residues 302–305 carry the Interaction with polymerase core subunit RpoC motif; the sequence is DLIQ. The sigma-70 factor domain-3 stretch occupies residues 357–433; sequence EVINKLARVQ…DSEAVVPADA (77 aa). A sigma-70 factor domain-4 region spans residues 446–499; it reads VLDTLSEREAGVVSMRFGLTDGQPKTLDEIGKVYGVTRERIRQIESKTMSKLRH. A DNA-binding region (H-T-H motif) is located at residues 472–491; the sequence is LDEIGKVYGVTRERIRQIES.

The protein belongs to the sigma-70 factor family. In terms of assembly, homotrimer (Potential). interacts transiently with the RNA polymerase core complex. Interacts with RNA polymerase-binding protein RbpA via its sigma-2 region (residues 211-347) in a free form.

Functionally, sigma factors are initiation factors that promote the attachment of RNA polymerase to specific initiation sites and are then released. This sigma factor is the primary sigma factor during exponential growth. Its activity is stimulated by RbpA. The sequence is that of RNA polymerase principal sigma factor HrdB (hrdB) from Streptomyces coelicolor (strain ATCC BAA-471 / A3(2) / M145).